A 131-amino-acid polypeptide reads, in one-letter code: Methylglyoxal synthase (131 aa).

Positions 1 to 131 (MKIALIAHDK…GDLDYRKLRK (131 aa)) constitute an MGS-like domain. Substrate is bound by residues histidine 8, lysine 12, 34–37 (TGTT), and 54–55 (SG). Aspartate 60 functions as the Proton donor/acceptor in the catalytic mechanism. Histidine 87 is a substrate binding site.

Belongs to the methylglyoxal synthase family.

It catalyses the reaction dihydroxyacetone phosphate = methylglyoxal + phosphate. Its function is as follows. Catalyzes the formation of methylglyoxal from dihydroxyacetone phosphate. The sequence is that of Methylglyoxal synthase from Bacillus mycoides (strain KBAB4) (Bacillus weihenstephanensis).